Here is a 356-residue protein sequence, read N- to C-terminus: MGSIAAGADEDACMYALQLVSSSILPMTLKNAIELGLLETLMAAGGKFLTPAEVAAKLPSAANPEAPDMVDRMLRLLASYNVVSCRTEDGKDGRLSRRYGAAPVCKYLTPNEDGVSMSALALMNQDKVLMESWYYLKDAVLDGGIPFNKAYGMSAFEYHGTDPRFNRVFNEGMKNHSIIITKKLLESYKGFEGLGTLVDVGGGVGATVAAITAHYPTIKGINFDLPHVISEAPPFPGVTHVGGDMFQKVPSGDAILMKWILHDWSDEHCATLLKNCYDALPAHGKVVLVECILPVNPEATPKAQGVFHVDMIMLAHNPGGRERYEREFEALAKGAGFAAMKTTYIYANAWAIEFTK.

A substrate-binding site is contributed by 123-129 (MNQDKVL). The tract at residues 155 to 173 (AFEYHGTDPRFNRVFNEGM) is substrate binding. 5 residues coordinate S-adenosyl-L-methionine: Gly201, Asp224, Asp244, Met245, and Lys258. His262 functions as the Proton acceptor in the catalytic mechanism.

Belongs to the class I-like SAM-binding methyltransferase superfamily. Cation-independent O-methyltransferase family. COMT subfamily. Homodimer. The monomer is fully active and dimerization is not required for sequential methylation. As to expression, expressed in roots, stems and leaves.

The catalysed reaction is tricetin + 3 S-adenosyl-L-methionine = 3',4',5'-O-trimethyltricetin + 3 S-adenosyl-L-homocysteine + 3 H(+). In terms of biological role, flavonoid B-ring-specific O-methyltransferase with a preference for flavones &gt; dihydroflavones &gt; flavonols that possess at least two B-ring hydroxyl groups. Active with tricetin, 5-hydroxyferulic acid, luteolin, quercitin, eriodictyol, quercetagetin, taxifolin, gossypetin and myricetin. No activity with naringenin, apigenin, kaempferol, 7,8-dihydroxy- or 5,7,8-trihydroxy flavones, chlorogenic acid, gallic acid or daphnetin. Catalyzes the sequential O-methylation of tricetin via 3'-O-methyltricetin, 3',5'-O-methyltricetin to 3',4',5'-O-trimethyltricetin. May also be involved in S lignin biosynthesis. In Triticum aestivum (Wheat), this protein is Tricetin 3',4',5'-O-trimethyltransferase (OMT2).